A 121-amino-acid polypeptide reads, in one-letter code: NADH-quinone oxidoreductase subunit 7 (121 aa).

Transmembrane regions (helical) follow at residues 11–31 (ILVF…AAAV), 65–85 (LVSI…PWAV), and 93–113 (VAFW…AYEW).

The protein belongs to the complex I subunit 3 family. NDH-1 is composed of at least 14 different subunits, Nqo1 to Nqo14. The complex has a L-shaped structure, with the hydrophobic arm (subunits Nqo7, Nqo8, Nqo10 to Nqo14) embedded in the inner membrane and the hydrophilic peripheral arm (subunits Nqo1 to Nqo6, Nqo9) protruding into the bacterial cytoplasm. The hydrophilic domain contains all the redox centers.

The protein resides in the cell inner membrane. The catalysed reaction is a quinone + NADH + 5 H(+)(in) = a quinol + NAD(+) + 4 H(+)(out). In terms of biological role, NDH-1 shuttles electrons from NADH, via FMN and iron-sulfur (Fe-S) centers, to quinones in the respiratory chain. The immediate electron acceptor for the enzyme in this species is believed to be ubiquinone. Couples the redox reaction to proton translocation (for every two electrons transferred, four hydrogen ions are translocated across the cytoplasmic membrane), and thus conserves the redox energy in a proton gradient. The protein is NADH-quinone oxidoreductase subunit 7 (nqo7) of Paracoccus denitrificans.